We begin with the raw amino-acid sequence, 517 residues long: UDP-N-acetylmuramoyl-L-alanyl-D-glutamate--2,6-diaminopimelate ligase (517 aa).

UDP-N-acetyl-alpha-D-muramoyl-L-alanyl-D-glutamate contacts are provided by Leu-34 and Ser-36. 122-128 (GTSGKTT) contacts ATP. Residues 164 to 165 (TT), Ser-191, and Arg-199 contribute to the UDP-N-acetyl-alpha-D-muramoyl-L-alanyl-D-glutamate site. Lys-231 bears the N6-carboxylysine mark. Residues Arg-394, 418 to 421 (DNPR), Gly-476, and Glu-480 each bind meso-2,6-diaminopimelate. The Meso-diaminopimelate recognition motif motif lies at 418 to 421 (DNPR).

This sequence belongs to the MurCDEF family. MurE subfamily. It depends on Mg(2+) as a cofactor. In terms of processing, carboxylation is probably crucial for Mg(2+) binding and, consequently, for the gamma-phosphate positioning of ATP.

It is found in the cytoplasm. The enzyme catalyses UDP-N-acetyl-alpha-D-muramoyl-L-alanyl-D-glutamate + meso-2,6-diaminopimelate + ATP = UDP-N-acetyl-alpha-D-muramoyl-L-alanyl-gamma-D-glutamyl-meso-2,6-diaminopimelate + ADP + phosphate + H(+). The protein operates within cell wall biogenesis; peptidoglycan biosynthesis. Functionally, catalyzes the addition of meso-diaminopimelic acid to the nucleotide precursor UDP-N-acetylmuramoyl-L-alanyl-D-glutamate (UMAG) in the biosynthesis of bacterial cell-wall peptidoglycan. The protein is UDP-N-acetylmuramoyl-L-alanyl-D-glutamate--2,6-diaminopimelate ligase of Corynebacterium glutamicum (strain ATCC 13032 / DSM 20300 / JCM 1318 / BCRC 11384 / CCUG 27702 / LMG 3730 / NBRC 12168 / NCIMB 10025 / NRRL B-2784 / 534).